Reading from the N-terminus, the 116-residue chain is MKKEILEVFDNTYPDRNYTIEIVNPEFTSVCPKTGLPDFGTITVHYVPDRTCVELKSLKYYFLEFRNAGIFYENITNRILDDLVAAMQPRSITVTTKWKARGGITETVTASHTAQG.

Cysteine 31 serves as the catalytic Thioimide intermediate. Residue aspartate 38 is the Proton donor of the active site. Residues 53–55 (VEL) and 72–73 (YE) contribute to the substrate site.

The protein belongs to the GTP cyclohydrolase I family. QueF type 1 subfamily.

The protein resides in the cytoplasm. The catalysed reaction is 7-aminomethyl-7-carbaguanine + 2 NADP(+) = 7-cyano-7-deazaguanine + 2 NADPH + 3 H(+). It functions in the pathway tRNA modification; tRNA-queuosine biosynthesis. Functionally, catalyzes the NADPH-dependent reduction of 7-cyano-7-deazaguanine (preQ0) to 7-aminomethyl-7-deazaguanine (preQ1). The chain is NADPH-dependent 7-cyano-7-deazaguanine reductase from Chlorobium phaeovibrioides (strain DSM 265 / 1930) (Prosthecochloris vibrioformis (strain DSM 265)).